The chain runs to 422 residues: Serine--tRNA ligase (422 aa).

229 to 231 serves as a coordination point for L-serine; that stretch reads TAE. 260-262 contacts ATP; it reads RKE. Glu283 contacts L-serine. 347–350 is a binding site for ATP; it reads EISS. Ser383 lines the L-serine pocket.

The protein belongs to the class-II aminoacyl-tRNA synthetase family. Type-1 seryl-tRNA synthetase subfamily. As to quaternary structure, homodimer. The tRNA molecule binds across the dimer.

Its subcellular location is the cytoplasm. It carries out the reaction tRNA(Ser) + L-serine + ATP = L-seryl-tRNA(Ser) + AMP + diphosphate + H(+). The enzyme catalyses tRNA(Sec) + L-serine + ATP = L-seryl-tRNA(Sec) + AMP + diphosphate + H(+). It participates in aminoacyl-tRNA biosynthesis; selenocysteinyl-tRNA(Sec) biosynthesis; L-seryl-tRNA(Sec) from L-serine and tRNA(Sec): step 1/1. Functionally, catalyzes the attachment of serine to tRNA(Ser). Is also able to aminoacylate tRNA(Sec) with serine, to form the misacylated tRNA L-seryl-tRNA(Sec), which will be further converted into selenocysteinyl-tRNA(Sec). The polypeptide is Serine--tRNA ligase (Geobacter sp. (strain M21)).